The following is a 140-amino-acid chain: MANRTIVAFDFGTKSIGVAIGQEVTGTARALTSFKAQDGTPDWQKVEKLLKEWQPDLVVVGLPLNMDGTEQPLTARARRFANRLHGRFGVQIALQDERLSTVEARANLFDSGGYRALDKGSVDAASAVIILESWFDEQAG.

It belongs to the YqgF nuclease family.

It localises to the cytoplasm. Functionally, could be a nuclease involved in processing of the 5'-end of pre-16S rRNA. This is Putative pre-16S rRNA nuclease from Yersinia enterocolitica serotype O:8 / biotype 1B (strain NCTC 13174 / 8081).